A 186-amino-acid chain; its full sequence is Tumor necrosis factor alpha-induced protein 8-like protein 2 (186 aa).

This sequence belongs to the TNFAIP8 family. TNFAIP8L2 subfamily.

In terms of biological role, acts as a negative regulator of innate and adaptive immunity by maintaining immune homeostasis. Negative regulator of Toll-like receptor and T-cell receptor function. Prevents hyperresponsiveness of the immune system and maintains immune homeostasis. Inhibits jun/ap1 and NF-kappa-B activation. Promotes Fas-induced apoptosis. The polypeptide is Tumor necrosis factor alpha-induced protein 8-like protein 2 (tnfaip8l2) (Xenopus laevis (African clawed frog)).